Reading from the N-terminus, the 141-residue chain is Protein wingless (141 aa).

Ser-3 is lipidated: O-palmitoleoyl serine; by PORCN. Positions 40 to 49 are enriched in polar residues; it reads TDLEAPTQRN. The disordered stretch occupies residues 40–61; it reads TDLEAPTQRNDAAPHRAPRRER. Residues Cys-107 and Cys-122 are joined by a disulfide bond. Residues Asn-108 and Asn-138 are each glycosylated (N-linked (GlcNAc...) asparagine).

This sequence belongs to the Wnt family. Palmitoleoylated by porcupine. The lipid group functions as a sorting signal, targeting the ligand to polarized vesicles that transport wg to unique sites at the cell surface. Depalmitoleoylated by notum, leading to inhibit Wnt signaling pathway.

It localises to the secreted. It is found in the extracellular space. Its subcellular location is the extracellular matrix. Functionally, segment polarity protein. Binds to the frizzled seven-transmembrane receptors. This protein is probably a growth factor. The chain is Protein wingless (WG) from Manduca sexta (Tobacco hawkmoth).